A 192-amino-acid chain; its full sequence is Thymidine kinase (192 aa).

ATP contacts are provided by residues 9–16 (SAMNAGKS) and 87–90 (DECQ). Glu-88 functions as the Proton acceptor in the catalytic mechanism. Zn(2+) contacts are provided by Cys-145, Cys-147, Cys-182, and His-185.

It belongs to the thymidine kinase family. Homotetramer.

The protein localises to the cytoplasm. It catalyses the reaction thymidine + ATP = dTMP + ADP + H(+). The chain is Thymidine kinase from Vibrio vulnificus (strain YJ016).